We begin with the raw amino-acid sequence, 91 residues long: PqqA binding protein (91 aa).

This sequence belongs to the PqqD family. Monomer. Interacts with PqqE.

It participates in cofactor biosynthesis; pyrroloquinoline quinone biosynthesis. Functionally, functions as a PqqA binding protein and presents PqqA to PqqE, in the pyrroloquinoline quinone (PQQ) biosynthetic pathway. This Pseudomonas putida (strain W619) protein is PqqA binding protein.